The chain runs to 363 residues: Disease resistance protein RBA1 (363 aa).

Residues 12 to 175 (PVPKVFLSFR…EIVKEVERVL (164 aa)) enclose the TIR domain. Residues 21 to 26 (RGEEIR) and Gly53 contribute to the NAD(+) site. Residue Glu86 is part of the active site.

As to quaternary structure, homooligomer; homooligomerization is required for activity.

It localises to the cytoplasm. Its subcellular location is the nucleus. It is found in the nucleoplasm. It catalyses the reaction NAD(+) + H2O = ADP-D-ribose + nicotinamide + H(+). It carries out the reaction NADP(+) + H2O = ADP-D-ribose 2'-phosphate + nicotinamide + H(+). Functionally, disease resistance (R) protein that specifically recognizes the HopBA1 type III effector protein from P.syringae, and triggers cell death. Acts as a NAD(+) hydrolase (NADase): in response to pathogen-recognition, catalyzes cleavage of NAD(+) into ADP-D-ribose (ADPR) and nicotinamide; NAD(+) cleavage triggering a defense system that promotes cell death. In addition to ADPR, also generates a cyclization variant of cyclic ADPR (cADPR), termed v-cADPR, for which the cyclizing bond is unknown. Also able to hydrolyze NADP(+), but not other NAD(+)-related molecules. The sequence is that of Disease resistance protein RBA1 from Arabidopsis thaliana (Mouse-ear cress).